Reading from the N-terminus, the 137-residue chain is Cell division protein SepF (137 aa).

It belongs to the SepF family. As to quaternary structure, homodimer. Interacts with FtsZ.

Its subcellular location is the cytoplasm. In terms of biological role, cell division protein that is part of the divisome complex and is recruited early to the Z-ring. Probably stimulates Z-ring formation, perhaps through the cross-linking of FtsZ protofilaments. Its function overlaps with FtsA. This is Cell division protein SepF from Carboxydothermus hydrogenoformans (strain ATCC BAA-161 / DSM 6008 / Z-2901).